A 149-amino-acid polypeptide reads, in one-letter code: Endoribonuclease YbeY (149 aa).

Residues histidine 115, histidine 119, and histidine 125 each coordinate Zn(2+).

It belongs to the endoribonuclease YbeY family. Zn(2+) is required as a cofactor.

It localises to the cytoplasm. Its function is as follows. Single strand-specific metallo-endoribonuclease involved in late-stage 70S ribosome quality control and in maturation of the 3' terminus of the 16S rRNA. The sequence is that of Endoribonuclease YbeY from Mycoplasmopsis pulmonis (strain UAB CTIP) (Mycoplasma pulmonis).